Reading from the N-terminus, the 572-residue chain is MVNTNNHISDELDKNLDEMEFLKANSDFLRGTIEQSLANPITGSITQDDAKLLKFHGSYMQDDRDLRDERRKQKLEPAYSFMIRVRVPGGKATPEQWIAMDDISNQYANHTIKLTTRQAFQFHGILKRNLKQSMKNINHAVLDSIAACGDVNRNTMCNPNPYQSQVHKEINDYATRISNHLLPRTNAYHEIWLDGEKVLDSSEEKEPIYGNTYLPRKFKIGIAVPPSNDIDVYSQDIGLIAIVEQDELIGFNVTIGGGMGMTHGITETYPQLGRLIGFIPKEKVVDVCEKILTIQRDYGNRENRKNARFKYTVDRLGETWVTEELNRRLGWEIKAPRDFEFEHNGDRLGWIEGINNWNFTLFIQNGRVKDTEDYLLKTALREIAEIHTGDFRLSPNQNLVIANVSPEKKEEIQAIIDKYKLTDGKNYTGLRRNSMACVAFPTCGLAMAESERYLPSLITKIEDLLDESGLKEEEITIRMTGCPNGCARPALAEIAFIGKAPGKYNMYLGGSFKGERLNKIYKENIDENEILESLRPLLLRYSKERLDGEHFGDFVIRDGVIAKVHDGRDFHS.

Residues Cys-437, Cys-443, Cys-482, and Cys-486 each contribute to the [4Fe-4S] cluster site. Cys-486 is a siroheme binding site.

The protein belongs to the nitrite and sulfite reductase 4Fe-4S domain family. In terms of assembly, alpha(8)-beta(8). The alpha component is a flavoprotein, the beta component is a hemoprotein. It depends on siroheme as a cofactor. Requires [4Fe-4S] cluster as cofactor.

It catalyses the reaction hydrogen sulfide + 3 NADP(+) + 3 H2O = sulfite + 3 NADPH + 4 H(+). The protein operates within sulfur metabolism; hydrogen sulfide biosynthesis; hydrogen sulfide from sulfite (NADPH route): step 1/1. Functionally, component of the sulfite reductase complex that catalyzes the 6-electron reduction of sulfite to sulfide. This is one of several activities required for the biosynthesis of L-cysteine from sulfate. The chain is Sulfite reductase [NADPH] hemoprotein beta-component from Staphylococcus epidermidis (strain ATCC 35984 / DSM 28319 / BCRC 17069 / CCUG 31568 / BM 3577 / RP62A).